The sequence spans 115 residues: Large ribosomal subunit protein bL19 (115 aa).

It belongs to the bacterial ribosomal protein bL19 family. In terms of assembly, part of the 50S ribosomal subunit.

In terms of biological role, this protein is located at the 30S-50S ribosomal subunit interface and may play a role in the structure and function of the aminoacyl-tRNA binding site. This chain is Large ribosomal subunit protein bL19 (rplS), found in Bacillus subtilis (strain 168).